A 119-amino-acid polypeptide reads, in one-letter code: Fluoride-specific ion channel FluC 2 (119 aa).

A helical transmembrane segment spans residues 46–66 (FALGLLTFAGVTGDAALLVGV). 2 residues coordinate Na(+): glycine 70 and threonine 73. The chain crosses the membrane as a helical span at residues 96-116 (LNAVGNLACALVGIGLAWGIV).

Belongs to the fluoride channel Fluc/FEX (TC 1.A.43) family.

It localises to the cell membrane. It catalyses the reaction fluoride(in) = fluoride(out). With respect to regulation, na(+) is not transported, but it plays an essential structural role and its presence is essential for fluoride channel function. Its function is as follows. Fluoride-specific ion channel. Important for reducing fluoride concentration in the cell, thus reducing its toxicity. This chain is Fluoride-specific ion channel FluC 2, found in Haloarcula marismortui (strain ATCC 43049 / DSM 3752 / JCM 8966 / VKM B-1809) (Halobacterium marismortui).